The chain runs to 129 residues: D-ribose pyranase (129 aa).

His20 (proton donor) is an active-site residue. Substrate-binding positions include Asp28, His96, and 118-120; that span reads YAN.

The protein belongs to the RbsD / FucU family. RbsD subfamily. As to quaternary structure, homodecamer.

Its subcellular location is the cytoplasm. It catalyses the reaction beta-D-ribopyranose = beta-D-ribofuranose. Its pathway is carbohydrate metabolism; D-ribose degradation; D-ribose 5-phosphate from beta-D-ribopyranose: step 1/2. Functionally, catalyzes the interconversion of beta-pyran and beta-furan forms of D-ribose. The chain is D-ribose pyranase from Staphylococcus haemolyticus (strain JCSC1435).